The primary structure comprises 283 residues: Tryptophan 2,3-dioxygenase (283 aa).

Substrate contacts are provided by residues 52-56 (FIIQH), Tyr114, and Arg118. His241 contacts heme. A substrate-binding site is contributed by Thr255.

Belongs to the tryptophan 2,3-dioxygenase family. In terms of assembly, homotetramer. Heme serves as cofactor.

It catalyses the reaction L-tryptophan + O2 = N-formyl-L-kynurenine. The protein operates within amino-acid degradation; L-tryptophan degradation via kynurenine pathway; L-kynurenine from L-tryptophan: step 1/2. Its function is as follows. Heme-dependent dioxygenase that catalyzes the oxidative cleavage of the L-tryptophan (L-Trp) pyrrole ring and converts L-tryptophan to N-formyl-L-kynurenine. Catalyzes the oxidative cleavage of the indole moiety. In Pseudomonas fluorescens (strain ATCC BAA-477 / NRRL B-23932 / Pf-5), this protein is Tryptophan 2,3-dioxygenase.